We begin with the raw amino-acid sequence, 208 residues long: Imidazoleglycerol-phosphate dehydratase (208 aa).

It belongs to the imidazoleglycerol-phosphate dehydratase family.

It is found in the cytoplasm. It catalyses the reaction D-erythro-1-(imidazol-4-yl)glycerol 3-phosphate = 3-(imidazol-4-yl)-2-oxopropyl phosphate + H2O. The protein operates within amino-acid biosynthesis; L-histidine biosynthesis; L-histidine from 5-phospho-alpha-D-ribose 1-diphosphate: step 6/9. The polypeptide is Imidazoleglycerol-phosphate dehydratase (Mycobacterium sp. (strain JLS)).